The primary structure comprises 280 residues: Nucleotide-binding protein CV_3336 (280 aa).

Residue 8–15 (GLSGSGKS) participates in ATP binding. 57–60 (DTRS) provides a ligand contact to GTP.

The protein belongs to the RapZ-like family.

Displays ATPase and GTPase activities. This Chromobacterium violaceum (strain ATCC 12472 / DSM 30191 / JCM 1249 / CCUG 213 / NBRC 12614 / NCIMB 9131 / NCTC 9757 / MK) protein is Nucleotide-binding protein CV_3336.